We begin with the raw amino-acid sequence, 233 residues long: DnaA regulatory inactivator Hda (233 aa).

This sequence belongs to the DnaA family. HdA subfamily. As to quaternary structure, the active form seems to be an ADP-bound monomer. Forms the RIDA complex (regulatory inactivation of DnaA) of ATP-DnaA, ADP-Hda and the DNA-loaded beta sliding clamp (dnaN).

Functionally, mediates the interaction of DNA replication initiator protein DnaA with DNA polymerase subunit beta sliding clamp (dnaN). Stimulates hydrolysis of ATP-DnaA to ADP-DnaA, rendering DnaA inactive for reinitiation, a process called regulatory inhibition of DnaA or RIDA. The sequence is that of DnaA regulatory inactivator Hda from Photorhabdus laumondii subsp. laumondii (strain DSM 15139 / CIP 105565 / TT01) (Photorhabdus luminescens subsp. laumondii).